The primary structure comprises 465 residues: Siroheme synthase (465 aa).

Positions 1-203 (MDFLPLFHSL…GRPAEAERLL (203 aa)) are precorrin-2 dehydrogenase /sirohydrochlorin ferrochelatase. NAD(+) contacts are provided by residues 22 to 23 (EV) and 43 to 44 (PQ). Phosphoserine is present on Ser-128. The tract at residues 217–465 (GEVYLVGAGP…AWFEGAREDA (249 aa)) is uroporphyrinogen-III C-methyltransferase. Pro-226 serves as a coordination point for S-adenosyl-L-methionine. Asp-249 acts as the Proton acceptor in catalysis. Lys-271 (proton donor) is an active-site residue. S-adenosyl-L-methionine-binding positions include 302 to 304 (GGD), Ile-307, 332 to 333 (TA), Met-384, and Gly-413.

It in the N-terminal section; belongs to the precorrin-2 dehydrogenase / sirohydrochlorin ferrochelatase family. In the C-terminal section; belongs to the precorrin methyltransferase family.

It catalyses the reaction uroporphyrinogen III + 2 S-adenosyl-L-methionine = precorrin-2 + 2 S-adenosyl-L-homocysteine + H(+). The catalysed reaction is precorrin-2 + NAD(+) = sirohydrochlorin + NADH + 2 H(+). The enzyme catalyses siroheme + 2 H(+) = sirohydrochlorin + Fe(2+). It functions in the pathway cofactor biosynthesis; adenosylcobalamin biosynthesis; precorrin-2 from uroporphyrinogen III: step 1/1. The protein operates within cofactor biosynthesis; adenosylcobalamin biosynthesis; sirohydrochlorin from precorrin-2: step 1/1. It participates in porphyrin-containing compound metabolism; siroheme biosynthesis; precorrin-2 from uroporphyrinogen III: step 1/1. Its pathway is porphyrin-containing compound metabolism; siroheme biosynthesis; siroheme from sirohydrochlorin: step 1/1. It functions in the pathway porphyrin-containing compound metabolism; siroheme biosynthesis; sirohydrochlorin from precorrin-2: step 1/1. In terms of biological role, multifunctional enzyme that catalyzes the SAM-dependent methylations of uroporphyrinogen III at position C-2 and C-7 to form precorrin-2 via precorrin-1. Then it catalyzes the NAD-dependent ring dehydrogenation of precorrin-2 to yield sirohydrochlorin. Finally, it catalyzes the ferrochelation of sirohydrochlorin to yield siroheme. This chain is Siroheme synthase, found in Pseudomonas aeruginosa (strain LESB58).